Consider the following 354-residue polypeptide: Uroporphyrinogen decarboxylase (354 aa).

Substrate contacts are provided by residues 27 to 31 (RQAGR), Asp-77, Tyr-154, Ser-209, and His-327.

It belongs to the uroporphyrinogen decarboxylase family. Homodimer.

It localises to the cytoplasm. The enzyme catalyses uroporphyrinogen III + 4 H(+) = coproporphyrinogen III + 4 CO2. The protein operates within porphyrin-containing compound metabolism; protoporphyrin-IX biosynthesis; coproporphyrinogen-III from 5-aminolevulinate: step 4/4. Its function is as follows. Catalyzes the decarboxylation of four acetate groups of uroporphyrinogen-III to yield coproporphyrinogen-III. In Pseudoalteromonas translucida (strain TAC 125), this protein is Uroporphyrinogen decarboxylase.